A 456-amino-acid polypeptide reads, in one-letter code: Exodeoxyribonuclease 7 large subunit (456 aa).

This sequence belongs to the XseA family. In terms of assembly, heterooligomer composed of large and small subunits.

Its subcellular location is the cytoplasm. It catalyses the reaction Exonucleolytic cleavage in either 5'- to 3'- or 3'- to 5'-direction to yield nucleoside 5'-phosphates.. Functionally, bidirectionally degrades single-stranded DNA into large acid-insoluble oligonucleotides, which are then degraded further into small acid-soluble oligonucleotides. In Shigella dysenteriae serotype 1 (strain Sd197), this protein is Exodeoxyribonuclease 7 large subunit.